Consider the following 347-residue polypeptide: NADH-ubiquinone oxidoreductase chain 2 (347 aa).

10 helical membrane-spanning segments follow: residues 3 to 23 (PPIL…VMLS), 25 to 45 (HWLL…PILM), 66 to 86 (ASML…QWVI), 111 to 131 (FHFW…MILL), 149 to 169 (INTN…GWGG), 178 to 198 (IMAY…TYNP), 201 to 221 (MVLN…LFML), 237 to 257 (FPLI…LPPL), 274 to 294 (NMII…YFYL), and 325 to 345 (LLPP…MLSV).

The protein belongs to the complex I subunit 2 family. In terms of assembly, core subunit of respiratory chain NADH dehydrogenase (Complex I) which is composed of 45 different subunits. Interacts with TMEM242.

It localises to the mitochondrion inner membrane. The catalysed reaction is a ubiquinone + NADH + 5 H(+)(in) = a ubiquinol + NAD(+) + 4 H(+)(out). Its function is as follows. Core subunit of the mitochondrial membrane respiratory chain NADH dehydrogenase (Complex I) which catalyzes electron transfer from NADH through the respiratory chain, using ubiquinone as an electron acceptor. Essential for the catalytic activity and assembly of complex I. The protein is NADH-ubiquinone oxidoreductase chain 2 of Canis lupus familiaris (Dog).